The following is a 70-amino-acid chain: MKSGIHPEYVTTQVNCGCGNSFTTRSTRTSGQITVEICSNCHPFYTGKQKILDTGGRVARFEARYGRRKK.

Residues C16, C18, C38, and C41 each contribute to the Zn(2+) site.

This sequence belongs to the bacterial ribosomal protein bL31 family. Type A subfamily. Part of the 50S ribosomal subunit. Requires Zn(2+) as cofactor.

In terms of biological role, binds the 23S rRNA. The polypeptide is Large ribosomal subunit protein bL31 (Saccharopolyspora erythraea (strain ATCC 11635 / DSM 40517 / JCM 4748 / NBRC 13426 / NCIMB 8594 / NRRL 2338)).